Here is a 225-residue protein sequence, read N- to C-terminus: NAD(P)H-quinone oxidoreductase subunit K, chloroplastic (225 aa).

Positions 43, 44, 108, and 139 each coordinate [4Fe-4S] cluster.

The protein belongs to the complex I 20 kDa subunit family. As to quaternary structure, NDH is composed of at least 16 different subunits, 5 of which are encoded in the nucleus. It depends on [4Fe-4S] cluster as a cofactor.

The protein resides in the plastid. The protein localises to the chloroplast thylakoid membrane. The catalysed reaction is a plastoquinone + NADH + (n+1) H(+)(in) = a plastoquinol + NAD(+) + n H(+)(out). The enzyme catalyses a plastoquinone + NADPH + (n+1) H(+)(in) = a plastoquinol + NADP(+) + n H(+)(out). NDH shuttles electrons from NAD(P)H:plastoquinone, via FMN and iron-sulfur (Fe-S) centers, to quinones in the photosynthetic chain and possibly in a chloroplast respiratory chain. The immediate electron acceptor for the enzyme in this species is believed to be plastoquinone. Couples the redox reaction to proton translocation, and thus conserves the redox energy in a proton gradient. This chain is NAD(P)H-quinone oxidoreductase subunit K, chloroplastic, found in Oenothera argillicola (Appalachian evening primrose).